The sequence spans 252 residues: MERVLIVNADDFGLSKGQNYGIVEAYRNGVVTSTTALVNGEAIDHAAQLSRELPALGVGMHFVLTLGKPVSEMPGLTRDGLLGKWIWQMAEEDTLPLDEIAHELACQYQRFIDVFGREPTHLDSHHHVHMFPQIFPIVAHFAAQRGIALRIDRQTVLNADDLPSDLRSTQGFSSEFYGEEITEACFLRILDASAHRGEASLEVMCHPAFVDNIIRQSAYCYPRLTELEVLTSASLKAAIAERGYRPGSFLDI.

Positions 61 and 125 each coordinate Mg(2+).

It belongs to the YdjC deacetylase family. ChbG subfamily. As to quaternary structure, homodimer. It depends on Mg(2+) as a cofactor.

It is found in the cytoplasm. The catalysed reaction is N,N'-diacetylchitobiose + H2O = N-acetyl-beta-D-glucosaminyl-(1-&gt;4)-D-glucosamine + acetate. The enzyme catalyses diacetylchitobiose-6'-phosphate + H2O = N'-monoacetylchitobiose-6'-phosphate + acetate. It participates in glycan degradation; chitin degradation. Its function is as follows. Involved in the degradation of chitin. ChbG is essential for growth on the acetylated chitooligosaccharides chitobiose and chitotriose but is dispensable for growth on cellobiose and chitosan dimer, the deacetylated form of chitobiose. Deacetylation of chitobiose-6-P and chitotriose-6-P is necessary for both the activation of the chb promoter by the regulatory protein ChbR and the hydrolysis of phosphorylated beta-glucosides by the phospho-beta-glucosidase ChbF. Catalyzes the removal of only one acetyl group from chitobiose-6-P to yield monoacetylchitobiose-6-P, the inducer of ChbR and the substrate of ChbF. This Salmonella dublin (strain CT_02021853) protein is Chitooligosaccharide deacetylase.